The following is a 269-amino-acid chain: MLKINRKYAIILAIVAFSSFQTEAKAASISMLGTASNFGVLGGSTVTNTGPSVITESLGVSTGSSATGFPPAIVNGTIFTSDTVAAQAQVDNATAYNKLASLIPNKDLTGLDLGGLTLTPGVYSFSSSAQLTGILTLDNLGDPNALFVFQIGSTLTTASNSSIVTTNGDAPNVFFQIGSSATLGTGTQFMGNILALTSITLTTGVNIDCGRALAQNGAVTMDTNKVSNACYTKPQEKAVVPEPDSSLAVLGSGLVSLLFAFRKRFRKGW.

The first 24 residues, 1–24, serve as a signal peptide directing secretion; that stretch reads MLKINRKYAIILAIVAFSSFQTEA. 7 consecutive short sequence motifs (probable ice-binding motif (T/S-X-T)) follow at residues 45–47, 65–67, 128–130, 154–156, 180–182, 198–200, and 218–220; these read TVT, SAT, SAQ, TLT, SIT, and AVT. The PEP C-terminal anchor stretch occupies residues 240–263; it reads VPEPDSSLAVLGSGLVSLLFAFRK. A helical transmembrane segment spans residues 245–261; sequence SSLAVLGSGLVSLLFAF.

It belongs to the ice-binding protein family.

It is found in the cell outer membrane. In terms of biological role, a probable ice-binding protein that has ice-structuring activities in vitro. Thought not to anchor the cyanobacterium to ice surfaces, as its habitat is shallow puddles fed by glacier meltwater. This chain is Ice-binding protein, found in Nostoc sp. (strain HG1).